Reading from the N-terminus, the 332-residue chain is Phosphate acyltransferase (332 aa).

Belongs to the PlsX family. As to quaternary structure, homodimer. Probably interacts with PlsY.

The protein resides in the cytoplasm. It carries out the reaction a fatty acyl-[ACP] + phosphate = an acyl phosphate + holo-[ACP]. It functions in the pathway lipid metabolism; phospholipid metabolism. Catalyzes the reversible formation of acyl-phosphate (acyl-PO(4)) from acyl-[acyl-carrier-protein] (acyl-ACP). This enzyme utilizes acyl-ACP as fatty acyl donor, but not acyl-CoA. The protein is Phosphate acyltransferase of Fusobacterium nucleatum subsp. nucleatum (strain ATCC 25586 / DSM 15643 / BCRC 10681 / CIP 101130 / JCM 8532 / KCTC 2640 / LMG 13131 / VPI 4355).